We begin with the raw amino-acid sequence, 829 residues long: Periplasmic nitrate reductase (829 aa).

Residues M1 to A30 constitute a signal peptide (tat-type signal). One can recognise a 4Fe-4S Mo/W bis-MGD-type domain in the interval I41–D97. Positions 48, 51, 55, and 83 each coordinate [4Fe-4S] cluster. Residues K85, Q152, N177, C181, W214–M221, S245–H249, Q264–D266, M374, Q378, N484, S510–D511, K533, D560, and T718–T727 each bind Mo-bis(molybdopterin guanine dinucleotide). F794 provides a ligand contact to substrate. N802 and K819 together coordinate Mo-bis(molybdopterin guanine dinucleotide).

This sequence belongs to the prokaryotic molybdopterin-containing oxidoreductase family. NasA/NapA/NarB subfamily. Component of the periplasmic nitrate reductase NapAB complex composed of NapA and NapB. Requires [4Fe-4S] cluster as cofactor. It depends on Mo-bis(molybdopterin guanine dinucleotide) as a cofactor. Post-translationally, predicted to be exported by the Tat system. The position of the signal peptide cleavage has not been experimentally proven.

The protein localises to the periplasm. It catalyses the reaction 2 Fe(II)-[cytochrome] + nitrate + 2 H(+) = 2 Fe(III)-[cytochrome] + nitrite + H2O. Catalytic subunit of the periplasmic nitrate reductase complex NapAB. Receives electrons from NapB and catalyzes the reduction of nitrate to nitrite. The chain is Periplasmic nitrate reductase from Vibrio vulnificus (strain CMCP6).